The chain runs to 60 residues: UPF0337 protein SSP1134 (60 aa).

The disordered stretch occupies residues M1 to K41. A compositionally biased stretch (basic and acidic residues) spans D23–K41.

It belongs to the UPF0337 (CsbD) family.

The polypeptide is UPF0337 protein SSP1134 (Staphylococcus saprophyticus subsp. saprophyticus (strain ATCC 15305 / DSM 20229 / NCIMB 8711 / NCTC 7292 / S-41)).